The following is a 570-amino-acid chain: Pantothenate kinase 2, mitochondrial (570 aa).

A mitochondrion-targeting transit peptide spans 1 to 31 (MRRLGPFHPRVHWAAPPSLSSGLHRLLFLRG). Disordered stretches follow at residues 34 to 94 (IPSS…PRAR) and 127 to 198 (GRLG…SVSR). The Nucleolar localization signal motif lies at 82-94 (RWRNGRGGRPRAR). The span at 84–93 (RNGRGGRPRA) shows a compositional bias: basic residues. Residues 155-164 (PEGRRQEPLR) show a composition bias toward basic and acidic residues. S168, S169, and S189 each carry phosphoserine. A compositionally biased stretch (low complexity) spans 168 to 179 (SSASVPAVGASA). The Nuclear export signal motif lies at 268-275 (LELKDLTL). The active-site Proton acceptor is E338. The acetyl-CoA site is built by S392, S395, and R407.

Belongs to the type II pantothenate kinase family. In terms of assembly, homodimer. Post-translationally, synthesized as a 62-kDa precursor which is proteolytically processed by the mitochondrial-processing peptidase (MPP) via a 59-kDa intermediate to yield the mature mitochondrial 48-kDa subunit. In terms of tissue distribution, expressed in the brain (at protein level). Ubiquitous. Highly expressed in the testis. Expressed in the umbilical vein endothelial cells (HUVEC).

It is found in the mitochondrion. Its subcellular location is the mitochondrion intermembrane space. The protein localises to the nucleus. The protein resides in the cytoplasm. It catalyses the reaction (R)-pantothenate + ATP = (R)-4'-phosphopantothenate + ADP + H(+). Its pathway is cofactor biosynthesis; coenzyme A biosynthesis; CoA from (R)-pantothenate: step 1/5. With respect to regulation, strongly inhibited by acetyl-CoA and its thioesters. Activated by palmitoylcarnitine. Its function is as follows. Mitochondrial isoform that catalyzes the phosphorylation of pantothenate to generate 4'-phosphopantothenate in the first and rate-determining step of coenzyme A (CoA) synthesis. Required for angiogenic activity of umbilical vein of endothelial cells (HUVEC). In terms of biological role, cytoplasmic isoform that catalyzes the phosphorylation of pantothenate to generate 4'-phosphopantothenate in the first and rate-determining step of coenzyme A (CoA) synthesis. This Homo sapiens (Human) protein is Pantothenate kinase 2, mitochondrial (PANK2).